Consider the following 72-residue polypeptide: MSKEDVIEMQGTVLESLPNAMFEVELESGQKILAHISGKLRMNFIRILPGDKVTVELSPYDLTRGRITWRAK.

An S1-like domain is found at 1 to 72 (MSKEDVIEMQ…TRGRITWRAK (72 aa)).

It belongs to the IF-1 family. In terms of assembly, component of the 30S ribosomal translation pre-initiation complex which assembles on the 30S ribosome in the order IF-2 and IF-3, IF-1 and N-formylmethionyl-tRNA(fMet); mRNA recruitment can occur at any time during PIC assembly.

The protein resides in the cytoplasm. In terms of biological role, one of the essential components for the initiation of protein synthesis. Stabilizes the binding of IF-2 and IF-3 on the 30S subunit to which N-formylmethionyl-tRNA(fMet) subsequently binds. Helps modulate mRNA selection, yielding the 30S pre-initiation complex (PIC). Upon addition of the 50S ribosomal subunit IF-1, IF-2 and IF-3 are released leaving the mature 70S translation initiation complex. In Clostridium acetobutylicum (strain ATCC 824 / DSM 792 / JCM 1419 / IAM 19013 / LMG 5710 / NBRC 13948 / NRRL B-527 / VKM B-1787 / 2291 / W), this protein is Translation initiation factor IF-1.